A 565-amino-acid chain; its full sequence is Proline--tRNA ligase (565 aa).

This sequence belongs to the class-II aminoacyl-tRNA synthetase family. ProS type 1 subfamily. As to quaternary structure, homodimer.

Its subcellular location is the cytoplasm. The enzyme catalyses tRNA(Pro) + L-proline + ATP = L-prolyl-tRNA(Pro) + AMP + diphosphate. Catalyzes the attachment of proline to tRNA(Pro) in a two-step reaction: proline is first activated by ATP to form Pro-AMP and then transferred to the acceptor end of tRNA(Pro). As ProRS can inadvertently accommodate and process non-cognate amino acids such as alanine and cysteine, to avoid such errors it has two additional distinct editing activities against alanine. One activity is designated as 'pretransfer' editing and involves the tRNA(Pro)-independent hydrolysis of activated Ala-AMP. The other activity is designated 'posttransfer' editing and involves deacylation of mischarged Ala-tRNA(Pro). The misacylated Cys-tRNA(Pro) is not edited by ProRS. This is Proline--tRNA ligase from Hydrogenobaculum sp. (strain Y04AAS1).